We begin with the raw amino-acid sequence, 505 residues long: Cytochrome P450 71A2 (505 aa).

The chain crosses the membrane as a helical span at residues 7-27; that stretch reads WYSLLIPLFVFIFLLIHHCFF. Position 448 (Cys448) interacts with heme.

This sequence belongs to the cytochrome P450 family. Requires heme as cofactor.

It is found in the membrane. In terms of biological role, may have a role in maturation, such as during flavor formation or other metabolite production specific to aging tissues. The protein is Cytochrome P450 71A2 (CYP71A2) of Solanum melongena (Eggplant).